Consider the following 68-residue polypeptide: Large ribosomal subunit protein bL35 (68 aa).

This sequence belongs to the bacterial ribosomal protein bL35 family.

This is Large ribosomal subunit protein bL35 from Rickettsia akari (strain Hartford).